Consider the following 269-residue polypeptide: MSVLDEIIDGVRADLAERQARVSLDELKERAAKARPAKDGVAALRGDGVKVICEVKRSSPSKGALAAIADPAGLAADYEAGGAAVISVLTEERRFGGSLADLDSVRARVDIPVLRKDFIVTSYQLWEARAHGADLVLLIVAALEQPALESLIERAESIGLTPLVEVHDEDEVERAVDAGAKVIGVNARNLKTLEVDRGTFERVAPEIPAHIVKVAESGVRGPHDLIAYANEGADAVLVGESLVTGRDPKTAVSDLVAAGEHPALRHGRS.

It belongs to the TrpC family.

The catalysed reaction is 1-(2-carboxyphenylamino)-1-deoxy-D-ribulose 5-phosphate + H(+) = (1S,2R)-1-C-(indol-3-yl)glycerol 3-phosphate + CO2 + H2O. The protein operates within amino-acid biosynthesis; L-tryptophan biosynthesis; L-tryptophan from chorismate: step 4/5. The chain is Indole-3-glycerol phosphate synthase 1 (trpC1) from Streptomyces coelicolor (strain ATCC BAA-471 / A3(2) / M145).